A 979-amino-acid chain; its full sequence is DNA ligase 4 (979 aa).

Positions 1–39 are disordered; that stretch reads MDSDEIMPDEEHPNVPVGDEESDIDEKYPNRPRNHSPTL. Glu320, Lys322, Leu323, Arg327, Glu389, Phe430, Glu490, Lys495, Lys512, and Lys514 together coordinate ATP. Lys322 (N6-AMP-lysine intermediate) is an active-site residue. Glu389 serves as a coordination point for Mg(2+). A Mg(2+)-binding site is contributed by Glu490. BRCT domains follow at residues 721–814 and 867–965; these read PSGH…PDFL and LQES…RFQP.

This sequence belongs to the ATP-dependent DNA ligase family. Mg(2+) serves as cofactor.

It is found in the nucleus. The catalysed reaction is ATP + (deoxyribonucleotide)n-3'-hydroxyl + 5'-phospho-(deoxyribonucleotide)m = (deoxyribonucleotide)n+m + AMP + diphosphate.. DNA ligase involved in DNA non-homologous end joining (NHEJ); required for double-strand break (DSB) repair. This chain is DNA ligase 4 (lig4), found in Aspergillus fumigatus (strain ATCC MYA-4609 / CBS 101355 / FGSC A1100 / Af293) (Neosartorya fumigata).